The primary structure comprises 841 residues: 27S pre-rRNA (guanosine(2922)-2'-O)-methyltransferase (841 aa).

S-adenosyl-L-methionine-binding residues include Gly-58, Trp-60, Asp-78, Asp-94, and Asp-119. The active-site Proton acceptor is the Lys-159. The stretch at 360–389 (QEKQRLNVKRERRRKNEMKQKELQRMQMNM) forms a coiled coil. 2 positions are modified to phosphoserine: Ser-455 and Ser-464. Disordered regions lie at residues 480 to 534 (RDAK…DDEA) and 565 to 654 (NNVE…HSRD). Basic and acidic residues predominate over residues 505–517 (SLEKKEEEGKDYI). Acidic residues predominate over residues 518-534 (EDNDDEGVEGDSDDDEA). Ser-529 is modified (phosphoserine). The span at 574-585 (NTVNDGIMSSES) shows a compositional bias: polar residues. Basic and acidic residues predominate over residues 598 to 607 (HEEMHQKQDE). Composition is skewed to acidic residues over residues 608–621 (ADSS…DSDF) and 629–641 (ASEE…DSEE). Residues 642-654 (EKNQTKKEKHSRD) are compositionally biased toward basic and acidic residues.

This sequence belongs to the class I-like SAM-binding methyltransferase superfamily. RNA methyltransferase RlmE family. SPB1 subfamily. Component of the nucleolar and nucleoplasmic pre-60S ribosomal particle. Interacts with the snoRNA-associated proteins NOP1 and NOP58.

The protein localises to the nucleus. Its subcellular location is the nucleolus. The catalysed reaction is guanosine(2922) in 27S pre-rRNA + S-adenosyl-L-methionine = 2'-O-methylguanosine(2922) in 27S pre-rRNA + S-adenosyl-L-homocysteine + H(+). Required for proper assembly of pre-ribosomal particles during the biogenesis of the 60S ribosomal subunit. Specifically methylates the guanosine in position 2922 of the 25S rRNA at the stage of 27S pre-rRNA maturation. Also methylates the uridine in position 2921 in the absence of methylation of this residue guided by snoRNA snR52 at the stage of 35S pre-rRNA maturation. This chain is 27S pre-rRNA (guanosine(2922)-2'-O)-methyltransferase, found in Saccharomyces cerevisiae (strain ATCC 204508 / S288c) (Baker's yeast).